Consider the following 72-residue polypeptide: UPF0346 protein GTNG_1419 (72 aa).

The protein belongs to the UPF0346 family.

The polypeptide is UPF0346 protein GTNG_1419 (Geobacillus thermodenitrificans (strain NG80-2)).